Here is a 35-residue protein sequence, read N- to C-terminus: Photosystem II reaction center protein Y (35 aa).

Residues 1–4 (MDTR) lie on the Lumenal side of the membrane. A helical membrane pass occupies residues 5–23 (LLIVLLPIIAAASWAIYNI). Over 24–35 (GKILLLQLTKRS) the chain is Stromal.

The protein belongs to the PsbY family. In terms of assembly, PSII is composed of 1 copy each of membrane proteins PsbA, PsbB, PsbC, PsbD, PsbE, PsbF, PsbH, PsbI, PsbJ, PsbK, PsbL, PsbM, PsbT, PsbX, PsbY, PsbZ, Psb30/Ycf12, at least 3 peripheral proteins of the oxygen-evolving complex and a large number of cofactors. It forms dimeric complexes.

Its subcellular location is the plastid. The protein resides in the chloroplast thylakoid membrane. Functionally, loosely associated component of the core of photosystem II (PSII), it is not always seen in crystals. PSII is a light-driven water plastoquinone oxidoreductase, using light energy to abstract electrons from H(2)O, generating a proton gradient subsequently used for ATP formation. The protein is Photosystem II reaction center protein Y of Cyanidioschyzon merolae (strain NIES-3377 / 10D) (Unicellular red alga).